We begin with the raw amino-acid sequence, 396 residues long: MTKPIRNVAVLGATGSIGAAALDVLARHPRQFHVSLLAAGQRVDALLALCHTYRPDHAVIGDATLYTTLRDGLNAAGLATKAYAGEAALAELVASTTCDTVVAAIVGAAGLHSTLAAARAGKRLLLANKESLVLAGMLLMREASISGAEIIPIDSEHNAIFQCLRSRTTDGVHRITLTASGGPFRGHNRTMLAKITPTQAMAHPTWSMGPKISVDSATLMNKGLEVIEAHHLFGLPSEQIDVLVHPQSLVHSLVEFIDGSTLAQLSLPDMRTTLAVGLSWPERIGSGVPGLDLMKHNRLDFERPDTETFSCLRLARDAMQTGGTAPAVLNAANEIAVSAFLQGRIGFLTIPALIEHALTTLPRYEADTLETLLTVDTETRRITHAALTHFPLPLPL.

NADPH-binding residues include threonine 14, glycine 15, serine 16, isoleucine 17, glycine 40, and asparagine 128. Residue lysine 129 coordinates 1-deoxy-D-xylulose 5-phosphate. Glutamate 130 lines the NADPH pocket. Residue aspartate 154 participates in Mn(2+) binding. Positions 155, 156, 180, and 203 each coordinate 1-deoxy-D-xylulose 5-phosphate. A Mn(2+)-binding site is contributed by glutamate 156. Glycine 209 contacts NADPH. 4 residues coordinate 1-deoxy-D-xylulose 5-phosphate: serine 216, asparagine 221, lysine 222, and glutamate 225. Residue glutamate 225 participates in Mn(2+) binding.

This sequence belongs to the DXR family. Mg(2+) is required as a cofactor. The cofactor is Mn(2+).

The catalysed reaction is 2-C-methyl-D-erythritol 4-phosphate + NADP(+) = 1-deoxy-D-xylulose 5-phosphate + NADPH + H(+). It functions in the pathway isoprenoid biosynthesis; isopentenyl diphosphate biosynthesis via DXP pathway; isopentenyl diphosphate from 1-deoxy-D-xylulose 5-phosphate: step 1/6. Catalyzes the NADPH-dependent rearrangement and reduction of 1-deoxy-D-xylulose-5-phosphate (DXP) to 2-C-methyl-D-erythritol 4-phosphate (MEP). This is 1-deoxy-D-xylulose 5-phosphate reductoisomerase from Xylella fastidiosa (strain 9a5c).